The chain runs to 393 residues: MTNSNRIKLTWISFLSYALTGALVIVTGMVMGNIADYFNLPVSSMSNTFTFLNAGILISIFLNAWLMEIVPLKTQLRFGFLLMVLAVAGLMFSHSLALFSAAMFILGVVSGITMSIGTFLVTQMYEGRQRGSRLLFTDSFFSMAGMIFPMIAAFLLARSIEWYWVYACIGLVYVAIFILTFGCEFPALGKHAPKTDAPVAKEKWGIGVLFLSVAALCYILGQLGFISWVPEYAKGLGMSLNDAGTLVSNFWMSYMVGMWAFSFILRFFDLQRILTVLAGLAAILMYVFNTGTPAHMAWSILALGFFSSAIYTTIITLGSQQTKVPSPKLVNFVLTCGTIGTMLTFVVTGPIVEHSGPQAALLTANGLYAVVFVMCFLLGFVSRHRQHNTLTSH.

The Cytoplasmic portion of the chain corresponds to 1–10; that stretch reads MTNSNRIKLT. The chain crosses the membrane as a helical span at residues 11–31; that stretch reads WISFLSYALTGALVIVTGMVM. The Periplasmic portion of the chain corresponds to 32-50; the sequence is GNIADYFNLPVSSMSNTFT. A helical transmembrane segment spans residues 51–71; the sequence is FLNAGILISIFLNAWLMEIVP. At 72-77 the chain is on the cytoplasmic side; sequence LKTQLR. The helical transmembrane segment at 78–98 threads the bilayer; sequence FGFLLMVLAVAGLMFSHSLAL. Topologically, residues 99–100 are periplasmic; that stretch reads FS. The chain crosses the membrane as a helical span at residues 101-121; it reads AAMFILGVVSGITMSIGTFLV. Residues 122 to 133 are Cytoplasmic-facing; it reads TQMYEGRQRGSR. A helical membrane pass occupies residues 134-154; the sequence is LLFTDSFFSMAGMIFPMIAAF. Over 155–161 the chain is Periplasmic; it reads LLARSIE. A helical membrane pass occupies residues 162–182; it reads WYWVYACIGLVYVAIFILTFG. Topologically, residues 183-205 are cytoplasmic; it reads CEFPALGKHAPKTDAPVAKEKWG. The chain crosses the membrane as a helical span at residues 206 to 226; sequence IGVLFLSVAALCYILGQLGFI. The Periplasmic segment spans residues 227 to 244; that stretch reads SWVPEYAKGLGMSLNDAG. The helical transmembrane segment at 245 to 265 threads the bilayer; that stretch reads TLVSNFWMSYMVGMWAFSFIL. Over 266 to 272 the chain is Cytoplasmic; it reads RFFDLQR. A helical membrane pass occupies residues 273–293; sequence ILTVLAGLAAILMYVFNTGTP. Residues 294–296 are Periplasmic-facing; the sequence is AHM. A helical membrane pass occupies residues 297 to 317; that stretch reads AWSILALGFFSSAIYTTIITL. Over 318 to 331 the chain is Cytoplasmic; sequence GSQQTKVPSPKLVN. Residues 332–352 form a helical membrane-spanning segment; sequence FVLTCGTIGTMLTFVVTGPIV. Residues 353–360 lie on the Periplasmic side of the membrane; the sequence is EHSGPQAA. The helical transmembrane segment at 361-381 threads the bilayer; sequence LLTANGLYAVVFVMCFLLGFV. The Cytoplasmic portion of the chain corresponds to 382–393; that stretch reads SRHRQHNTLTSH.

Belongs to the major facilitator superfamily. TsgA family.

Its subcellular location is the cell inner membrane. In Escherichia coli O157:H7, this protein is Protein TsgA (tsgA).